The primary structure comprises 151 residues: 6,7-dimethyl-8-ribityllumazine synthase (151 aa).

5-amino-6-(D-ribitylamino)uracil is bound by residues F23, 55-57, and 79-81; these read AYE and AVI. 84–85 lines the (2S)-2-hydroxy-3-oxobutyl phosphate pocket; the sequence is AT. The active-site Proton donor is H87. F111 contributes to the 5-amino-6-(D-ribitylamino)uracil binding site. R125 contacts (2S)-2-hydroxy-3-oxobutyl phosphate.

This sequence belongs to the DMRL synthase family.

The enzyme catalyses (2S)-2-hydroxy-3-oxobutyl phosphate + 5-amino-6-(D-ribitylamino)uracil = 6,7-dimethyl-8-(1-D-ribityl)lumazine + phosphate + 2 H2O + H(+). It functions in the pathway cofactor biosynthesis; riboflavin biosynthesis; riboflavin from 2-hydroxy-3-oxobutyl phosphate and 5-amino-6-(D-ribitylamino)uracil: step 1/2. In terms of biological role, catalyzes the formation of 6,7-dimethyl-8-ribityllumazine by condensation of 5-amino-6-(D-ribitylamino)uracil with 3,4-dihydroxy-2-butanone 4-phosphate. This is the penultimate step in the biosynthesis of riboflavin. This Leptospira interrogans serogroup Icterohaemorrhagiae serovar copenhageni (strain Fiocruz L1-130) protein is 6,7-dimethyl-8-ribityllumazine synthase.